A 2623-amino-acid polypeptide reads, in one-letter code: Probable polyketide synthase 31 (2623 aa).

Low complexity predominate over residues 1–11 (MTQNIDNNNNK). The segment at 1–25 (MTQNIDNNNNKLIRDRNDDDDVDRN) is disordered. Residues 27 to 461 (DGDVAVIGIG…GSNVCLILSE (435 aa)) form the Ketosynthase family 3 (KS3) domain. Catalysis depends on for beta-ketoacyl synthase activity residues Cys-199, His-338, and His-384. The acyl/malonyl transferase stretch occupies residues 666–699 (GVSADIIIGHSLGEVSSPYCSGMIDFQTLCYLIY). Ser-676 serves as the catalytic For acyl/malonyl transferase activity. Residues 959-1088 (HEKIKSEGPS…GNFNLTKHNS (130 aa)) form an N-terminal hotdog fold region. The PKS/mFAS DH domain occupies 959 to 1267 (HEKIKSEGPS…CALVSLGSNP (309 aa)). Residue His-1000 is the Proton acceptor; for dehydratase activity of the active site. The tract at residues 1105–1267 (NFTSISKQDF…CALVSLGSNP (163 aa)) is C-terminal hotdog fold. The active-site Proton donor; for dehydratase activity is the Asp-1177. The 78-residue stretch at 2524–2601 (ANNEIIHSTI…QSIEIIKSAK (78 aa)) folds into the Carrier domain. Position 2561 is an O-(pantetheine 4'-phosphoryl)serine (Ser-2561). A disordered region spans residues 2600–2623 (AKNNNKNNNNNNNKNNSNNKNKNN). A compositionally biased stretch (low complexity) spans 2601 to 2623 (KNNNKNNNNNNNKNNSNNKNKNN).

The cofactor is pantetheine 4'-phosphate.

Probable polyketide synthase. The protein is Probable polyketide synthase 31 (pks31) of Dictyostelium discoideum (Social amoeba).